The primary structure comprises 858 residues: Protein translocase subunit SecA (858 aa).

Residues glutamine 88, glycine 106–threonine 110, and aspartate 494 each bind ATP. Residues lysine 808–arginine 848 form a disordered region. Residues cysteine 842, cysteine 844, cysteine 853, and cysteine 854 each contribute to the Zn(2+) site.

This sequence belongs to the SecA family. In terms of assembly, monomer and homodimer. Part of the essential Sec protein translocation apparatus which comprises SecA, SecYEG and auxiliary proteins SecDF-YajC and YidC. It depends on Zn(2+) as a cofactor.

Its subcellular location is the cell inner membrane. It is found in the cytoplasm. The catalysed reaction is ATP + H2O + cellular proteinSide 1 = ADP + phosphate + cellular proteinSide 2.. Its function is as follows. Part of the Sec protein translocase complex. Interacts with the SecYEG preprotein conducting channel. Has a central role in coupling the hydrolysis of ATP to the transfer of proteins into and across the cell membrane, serving as an ATP-driven molecular motor driving the stepwise translocation of polypeptide chains across the membrane. The protein is Protein translocase subunit SecA of Desulfovibrio desulfuricans (strain ATCC 27774 / DSM 6949 / MB).